The chain runs to 373 residues: LIM domain-binding protein 1 (373 aa).

Disordered stretches follow at residues 248 to 297 (PPAE…LSSQ) and 329 to 373 (DAAN…QASQ). Positions 266–282 (SGGSTMSSGGGNTNNSN) are enriched in low complexity. A compositionally biased stretch (polar residues) spans 288–297 (PASTFALSSQ). One can recognise an LIM interaction domain (LID) domain in the interval 298–337 (DVMVVGEPTLMGGEFGDEDERLITRLENTQFDAANGIDDE).

The protein belongs to the LDB family. In terms of assembly, forms homodimers and heterodimers. Interacts with and activates lhx1/lim1. The stoichiometry of lhx1/lim1 and ldb1 is important for their function and an excess of ldb1 can inhibit lhx1/lim1 function. When bound to lhx1/lim1, escapes degradation by rnf12. Interacts with the N-terminal region of rnf12. In terms of processing, undergoes rnf12-mediated ubiquitin-proteasome-dependent degradation.

It localises to the nucleus. In terms of biological role, binds to the LIM domain of a wide variety of LIM domain-containing transcription factors. Acts as a coactivator together with otx2 to stimulate lhx1/lim1-mediated activation of the gsc promoter in the Spemann organizer. Acts synergistically with lhx1/lim1 and ssbp in axis formation. In Xenopus tropicalis (Western clawed frog), this protein is LIM domain-binding protein 1.